A 234-amino-acid chain; its full sequence is Putative lipoyltransferase 2, mitochondrial (234 aa).

The transit peptide at 1–28 directs the protein to the mitochondrion; that stretch reads MPFVRPLVTVVRAGRHSYSAGLQLQQRL. The 182-residue stretch at 39–220 folds into the BPL/LPL catalytic domain; sequence AEFRNYLVLQ…SFAKVFECRL (182 aa). Substrate-binding positions include 83 to 90, 150 to 152, and 163 to 165; these read RGGLITFH, AIG, and GIG. The active-site Acyl-thioester intermediate is the cysteine 181.

The protein belongs to the LipB family.

The protein localises to the mitochondrion. It carries out the reaction octanoyl-[ACP] + L-lysyl-[protein] = N(6)-octanoyl-L-lysyl-[protein] + holo-[ACP] + H(+). It functions in the pathway protein modification; protein lipoylation via endogenous pathway; protein N(6)-(lipoyl)lysine from octanoyl-[acyl-carrier-protein]: step 1/2. Catalyzes the transfer of endogenously produced octanoic acid from octanoyl-acyl-carrier-protein onto the lipoyl domains of lipoate-dependent enzymes. Lipoyl-ACP can also act as a substrate although octanoyl-ACP is likely to be the physiological substrate. This Drosophila melanogaster (Fruit fly) protein is Putative lipoyltransferase 2, mitochondrial.